A 688-amino-acid chain; its full sequence is Two-component response regulator ORR23 (688 aa).

In terms of domain architecture, Response regulatory spans 25–140 (RVLAVDDDPV…ELRNIWQHVI (116 aa)). Position 76 is a 4-aspartylphosphate (aspartate 76). Residues 161–212 (PPNADSDHVHGHVTCGSPDQSGRPSKKRKEYCSEEEDEGEVNTQDIDDPSAP) form a disordered region. Over residues 193–208 (SEEEDEGEVNTQDIDD) the composition is skewed to acidic residues. A DNA-binding region (myb-like GARP) is located at residues 211–270 (APKKPRVVWSVELHRKFVAAVNQLGIDKAVPKRILELMNVEKLTRENVASHLQKYRLYLK).

It belongs to the ARR family. Type-B subfamily. In terms of processing, two-component system major event consists of a His-to-Asp phosphorelay between a sensor histidine kinase (HK) and a response regulator (RR). In plants, the His-to-Asp phosphorelay involves an additional intermediate named Histidine-containing phosphotransfer protein (HPt). This multistep phosphorelay consists of a His-Asp-His-Asp sequential transfer of a phosphate group between first a His and an Asp of the HK protein, followed by the transfer to a conserved His of the HPt protein and finally the transfer to an Asp in the receiver domain of the RR protein.

It is found in the nucleus. Functionally, transcriptional activator that binds specific DNA sequence. Functions as a response regulator involved in His-to-Asp phosphorelay signal transduction system. Phosphorylation of the Asp residue in the receiver domain activates the ability of the protein to promote the transcription of target genes. May directly activate some type-A response regulators in response to cytokinins. In Oryza sativa subsp. japonica (Rice), this protein is Two-component response regulator ORR23.